Here is a 137-residue protein sequence, read N- to C-terminus: Large ribosomal subunit protein uL16 (137 aa).

This sequence belongs to the universal ribosomal protein uL16 family. As to quaternary structure, part of the 50S ribosomal subunit.

In terms of biological role, binds 23S rRNA and is also seen to make contacts with the A and possibly P site tRNAs. The polypeptide is Large ribosomal subunit protein uL16 (Spiroplasma citri).